A 291-amino-acid polypeptide reads, in one-letter code: Ribosomal RNA small subunit methyltransferase H (291 aa).

S-adenosyl-L-methionine is bound by residues 25–27, aspartate 45, phenylalanine 73, aspartate 88, and glutamine 95; that span reads GGH.

The protein belongs to the methyltransferase superfamily. RsmH family.

It localises to the cytoplasm. The catalysed reaction is cytidine(1402) in 16S rRNA + S-adenosyl-L-methionine = N(4)-methylcytidine(1402) in 16S rRNA + S-adenosyl-L-homocysteine + H(+). Specifically methylates the N4 position of cytidine in position 1402 (C1402) of 16S rRNA. The polypeptide is Ribosomal RNA small subunit methyltransferase H (Flavobacterium psychrophilum (strain ATCC 49511 / DSM 21280 / CIP 103535 / JIP02/86)).